A 201-amino-acid polypeptide reads, in one-letter code: Small ribosomal subunit protein uS4 (201 aa).

The 61-residue stretch at 91 to 151 (SRLDNVVYRA…EKSQKMNWFE (61 aa)) folds into the S4 RNA-binding domain.

Belongs to the universal ribosomal protein uS4 family. In terms of assembly, part of the 30S ribosomal subunit. Contacts protein S5. The interaction surface between S4 and S5 is involved in control of translational fidelity.

Its function is as follows. One of the primary rRNA binding proteins, it binds directly to 16S rRNA where it nucleates assembly of the body of the 30S subunit. Functionally, with S5 and S12 plays an important role in translational accuracy. The chain is Small ribosomal subunit protein uS4 from Corynebacterium efficiens (strain DSM 44549 / YS-314 / AJ 12310 / JCM 11189 / NBRC 100395).